The primary structure comprises 688 residues: Polyphosphate kinase (688 aa).

An ATP-binding site is contributed by asparagine 45. Positions 375 and 405 each coordinate Mg(2+). The PLD phosphodiesterase domain occupies 430–464 (PGLKIHAKLFLISRKENGEVVRYAHIGTGNFNEKT). The active-site Phosphohistidine intermediate is the histidine 435. ATP is bound by residues tyrosine 468, arginine 564, and histidine 592.

This sequence belongs to the polyphosphate kinase 1 (PPK1) family. It depends on Mg(2+) as a cofactor. Post-translationally, an intermediate of this reaction is the autophosphorylated ppk in which a phosphate is covalently linked to a histidine residue through a N-P bond.

It carries out the reaction [phosphate](n) + ATP = [phosphate](n+1) + ADP. Its function is as follows. Catalyzes the reversible transfer of the terminal phosphate of ATP to form a long-chain polyphosphate (polyP). In Escherichia coli O157:H7, this protein is Polyphosphate kinase.